The following is a 315-amino-acid chain: Methionyl-tRNA formyltransferase (315 aa).

113 to 116 (SLLP) is a binding site for (6S)-5,6,7,8-tetrahydrofolate.

It belongs to the Fmt family.

The catalysed reaction is L-methionyl-tRNA(fMet) + (6R)-10-formyltetrahydrofolate = N-formyl-L-methionyl-tRNA(fMet) + (6S)-5,6,7,8-tetrahydrofolate + H(+). Attaches a formyl group to the free amino group of methionyl-tRNA(fMet). The formyl group appears to play a dual role in the initiator identity of N-formylmethionyl-tRNA by promoting its recognition by IF2 and preventing the misappropriation of this tRNA by the elongation apparatus. This is Methionyl-tRNA formyltransferase from Shigella sonnei (strain Ss046).